The sequence spans 283 residues: uncharacterized protein (283 aa).

Polar residues predominate over residues 1 to 10 (MEVNKTTESL). 2 disordered regions span residues 1 to 96 (MEVN…SGGN) and 255 to 283 (DQEG…EAQI). 2 stretches are compositionally biased toward basic and acidic residues: residues 14–34 (KVEH…RDVK) and 44–81 (SKQE…VSSR).

This sequence belongs to the chlamydial CPn_0705/CT_671/TC_0042 family.

This is an uncharacterized protein from Chlamydia muridarum (strain MoPn / Nigg).